A 195-amino-acid polypeptide reads, in one-letter code: Lipid A acyltransferase PagP (195 aa).

The first 30 residues, 1–30, serve as a signal peptide directing secretion; that stretch reads MRLTLTSRSRLFVLSSLLFISTFDVLSAQA. Residues histidine 67, aspartate 110, and serine 111 contribute to the active site.

The protein belongs to the lipid A palmitoyltransferase family. In terms of assembly, homodimer.

Its subcellular location is the cell outer membrane. It carries out the reaction a lipid A + a 1,2-diacyl-sn-glycero-3-phosphocholine = a hepta-acyl lipid A + a 2-acyl-sn-glycero-3-phosphocholine. It catalyses the reaction a lipid IVA + a 1,2-diacyl-sn-glycero-3-phosphocholine = a lipid IVB + a 2-acyl-sn-glycero-3-phosphocholine. The catalysed reaction is a lipid IIA + a 1,2-diacyl-sn-glycero-3-phosphocholine = a lipid IIB + a 2-acyl-sn-glycero-3-phosphocholine. In terms of biological role, transfers a fatty acid residue from the sn-1 position of a phospholipid to the N-linked hydroxyfatty acid chain on the proximal unit of lipid A or its precursors. In Dickeya chrysanthemi (strain Ech1591) (Dickeya zeae (strain Ech1591)), this protein is Lipid A acyltransferase PagP.